A 353-amino-acid polypeptide reads, in one-letter code: MSLSLNDIKFPSSWDLSPNDLSYIDDIYQEGLDLGVWRKDNQRDKLANENVVSLSKYFWPKVEYKKLIMGGELMLWFFTFDDAIDAGLYSDEKTAEIVKRMDRVFMDGTLPENPTGPEKVALSLRTKCKIMCGEQRKGTFNRFITSCIQWVDSIVPFNKVIANGDSPDLELYGFLRKVNIGAYPCVTLTEVMLESTLEQYIWFDPRWIKMNENIAIVVTLVNDLVSYEKEVRDKMGILNPLFFLQTKLNIELSESYKKLVDMIHHWISEYNELEERFLQLFTTDEEKKQIQFMLDHLHYLISGSRLWSMQTPRYISNTSPFIEMRKNCASLSITSFVSNCAESQRDLKKRKRV.

The DDxx(x)D/E motif signature appears at 81 to 86 (DDAIDA). The short motif at 222–230 (NDLVSYEKE) is the NDxxSxxxD/E motif element.

The protein belongs to the terpene synthase family.

It catalyses the reaction (2E,6E)-farnesyl diphosphate = (2S,3R,6S,9S)-(-)-protoillud-7-ene + diphosphate. Its function is as follows. Terpene synthase that converts its substrate farnesyl diphosphate (FPP) into the sesquiterpene protoillud-7-ene. This Tieghemostelium lacteum (Slime mold) protein is Terpene synthase 1.